We begin with the raw amino-acid sequence, 161 residues long: Vitamin K-dependent protein C (161 aa).

Residues Glu-1–Val-161 enclose the Peptidase S1 domain. Asn-17 carries an N-linked (GlcNAc...) asparagine glycan. Asp-26 serves as the catalytic Charge relay system. N-linked (GlcNAc...) asparagine glycosylation is present at Asn-82. Disulfide bonds link Cys-100-Cys-114 and Cys-125-Cys-153. Ser-129 functions as the Charge relay system in the catalytic mechanism.

It belongs to the peptidase S1 family. Plasma; synthesized in the liver.

The protein resides in the secreted. It localises to the golgi apparatus. It is found in the endoplasmic reticulum. The enzyme catalyses Degradation of blood coagulation factors Va and VIIIa.. Functionally, protein C is a vitamin K-dependent serine protease that regulates blood coagulation by inactivating factors Va and VIIIa in the presence of calcium ions and phospholipids. Exerts a protective effect on the endothelial cell barrier function. This chain is Vitamin K-dependent protein C (PROC), found in Macaca mulatta (Rhesus macaque).